The sequence spans 319 residues: HTH-type transcriptional regulator YidZ (319 aa).

Residues 8–65 enclose the HTH lysR-type domain; it reads LDLNLLLCLQLLMQERSVTKAAKRMNVTPSAVSKSLSKLRTWFDDPLFVNTPLGLTPT. Positions 25 to 44 form a DNA-binding region, H-T-H motif; sequence VTKAAKRMNVTPSAVSKSLS.

Belongs to the LysR transcriptional regulatory family.

Functionally, involved in anaerobic NO protection. The sequence is that of HTH-type transcriptional regulator YidZ from Citrobacter koseri (strain ATCC BAA-895 / CDC 4225-83 / SGSC4696).